A 356-amino-acid polypeptide reads, in one-letter code: tRNA-specific 2-thiouridylase MnmA (356 aa).

An ATP-binding site is contributed by A6–S13. C95 acts as the Nucleophile in catalysis. A disulfide bridge links C95 with C195. G119 provides a ligand contact to ATP. An interaction with tRNA region spans residues K145–Q147. Catalysis depends on C195, which acts as the Cysteine persulfide intermediate. An interaction with tRNA region spans residues R300–Y301.

This sequence belongs to the MnmA/TRMU family.

It is found in the cytoplasm. It carries out the reaction S-sulfanyl-L-cysteinyl-[protein] + uridine(34) in tRNA + AH2 + ATP = 2-thiouridine(34) in tRNA + L-cysteinyl-[protein] + A + AMP + diphosphate + H(+). Its function is as follows. Catalyzes the 2-thiolation of uridine at the wobble position (U34) of tRNA, leading to the formation of s(2)U34. This chain is tRNA-specific 2-thiouridylase MnmA, found in Oleidesulfovibrio alaskensis (strain ATCC BAA-1058 / DSM 17464 / G20) (Desulfovibrio alaskensis).